Here is a 943-residue protein sequence, read N- to C-terminus: Isoleucine--tRNA ligase (943 aa).

Positions 58 to 68 match the 'HIGH' region motif; the sequence is PYANGNIHIGH. L-isoleucyl-5'-AMP is bound at residue Glu567. The 'KMSKS' region signature appears at 608-612; sequence KMSKS. An ATP-binding site is contributed by Lys611. Residues Cys906, Cys909, Cys926, and Cys929 each contribute to the Zn(2+) site.

It belongs to the class-I aminoacyl-tRNA synthetase family. IleS type 1 subfamily. As to quaternary structure, monomer. The cofactor is Zn(2+).

Its subcellular location is the cytoplasm. The enzyme catalyses tRNA(Ile) + L-isoleucine + ATP = L-isoleucyl-tRNA(Ile) + AMP + diphosphate. Its function is as follows. Catalyzes the attachment of isoleucine to tRNA(Ile). As IleRS can inadvertently accommodate and process structurally similar amino acids such as valine, to avoid such errors it has two additional distinct tRNA(Ile)-dependent editing activities. One activity is designated as 'pretransfer' editing and involves the hydrolysis of activated Val-AMP. The other activity is designated 'posttransfer' editing and involves deacylation of mischarged Val-tRNA(Ile). The polypeptide is Isoleucine--tRNA ligase (Pseudomonas savastanoi pv. phaseolicola (strain 1448A / Race 6) (Pseudomonas syringae pv. phaseolicola (strain 1448A / Race 6))).